Reading from the N-terminus, the 340-residue chain is Flap endonuclease 1 (340 aa).

Positions 1–98 (MGLNLKDLVV…AEIERRKQIK (98 aa)) are N-domain. Aspartate 27, aspartate 80, glutamate 152, glutamate 154, aspartate 173, aspartate 175, and aspartate 236 together coordinate Mg(2+). The I-domain stretch occupies residues 116-258 (DARKYAQQTT…TALKMIKQHS (143 aa)).

This sequence belongs to the XPG/RAD2 endonuclease family. FEN1 subfamily. Interacts with PCNA. PCNA stimulates the nuclease activity without altering cleavage specificity. It depends on Mg(2+) as a cofactor.

Structure-specific nuclease with 5'-flap endonuclease and 5'-3' exonuclease activities involved in DNA replication and repair. During DNA replication, cleaves the 5'-overhanging flap structure that is generated by displacement synthesis when DNA polymerase encounters the 5'-end of a downstream Okazaki fragment. Binds the unpaired 3'-DNA end and kinks the DNA to facilitate 5' cleavage specificity. Cleaves one nucleotide into the double-stranded DNA from the junction in flap DNA, leaving a nick for ligation. Also involved in the base excision repair (BER) pathway. Acts as a genome stabilization factor that prevents flaps from equilibrating into structures that lead to duplications and deletions. Also possesses 5'-3' exonuclease activity on nicked or gapped double-stranded DNA. This chain is Flap endonuclease 1, found in Nitrosopumilus maritimus (strain SCM1).